Consider the following 135-residue polypeptide: VapC ribonuclease aq_1901 (135 aa).

One can recognise a PINc domain in the interval 3 to 130; sequence LLDTTVLLDF…FKKLGFKTVN (128 aa). Asp5 contributes to the Mg(2+) binding site.

The protein belongs to the PINc/VapC protein family. The cofactor is Mg(2+).

Its function is as follows. Toxic component of a type II toxin-antitoxin (TA) system. An RNase. The protein is VapC ribonuclease aq_1901 of Aquifex aeolicus (strain VF5).